Reading from the N-terminus, the 1273-residue chain is ABC transporter B family member 2 (1273 aa).

The first 30 residues, 1–30 (MYISLIFFLSNHFPPLISIPIFIFLSFSSP), serve as a signal peptide directing secretion. The next 7 helical transmembrane spans lie at 66 to 86 (FSFADFYDCVLMTLGSVGACI), 91 to 111 (VPIFFIFFGKLINIIGLAYLF), 126 to 146 (FVYLSVAILFSSWLEVACWMH), 209 to 229 (FIAGFAIGFTSVWQISLVTLS), 230 to 250 (IVPLIALAGGIYAFVAIGLIA), 305 to 325 (GLGLGSMHCVLFLSWALLVWF), and 345 to 365 (LNVVIAGLSLGQAAPDISAFV). Residues 77 to 366 (MTLGSVGACI…AAPDISAFVR (290 aa)) form the ABC transmembrane type-1 1 domain. One can recognise an ABC transporter 1 domain in the interval 401–637 (IQFKDATFSY…PDGAYSSLLR (237 aa)). 436–443 (GGSGSGKS) is an ATP binding site. N-linked (GlcNAc...) asparagine glycans are attached at residues Asn466 and Asn651. The 288-residue stretch at 710 to 997 (GVCGTICAFI…TLALAPDLLK (288 aa)) folds into the ABC transmembrane type-1 2 domain. The next 2 helical transmembrane spans lie at 711 to 731 (VCGTICAFIAGSQMPLFALGV) and 752 to 772 (IAILFCCASVITLIVYTIEHI). Asn806 is a glycosylation site (N-linked (GlcNAc...) asparagine). The next 3 helical transmembrane spans lie at 832–852 (ILLQNLGLVVTSFIIAFILNW), 934–954 (IAGLFYGVSQFFIFSSYGLAL), and 975–995 (FMVLIVTALAMGETLALAPDL). The 237-residue stretch at 1030–1266 (IELKGVHFSY…KSGPYFKLIS (237 aa)) folds into the ABC transporter 2 domain. An ATP-binding site is contributed by 1065–1072 (GQSGSGKS). N-linked (GlcNAc...) asparagine glycans are attached at residues Asn1217 and Asn1256.

Belongs to the ABC transporter superfamily. ABCB family. Multidrug resistance exporter (TC 3.A.1.201) subfamily. Interacts with 1-naphthylphthalamic acid (NPA).

Its subcellular location is the membrane. In Arabidopsis thaliana (Mouse-ear cress), this protein is ABC transporter B family member 2 (ABCB2).